A 235-amino-acid chain; its full sequence is Urease accessory protein UreF (235 aa).

This sequence belongs to the UreF family. UreD, UreF and UreG form a complex that acts as a GTP-hydrolysis-dependent molecular chaperone, activating the urease apoprotein by helping to assemble the nickel containing metallocenter of UreC. The UreE protein probably delivers the nickel.

It is found in the cytoplasm. Its function is as follows. Required for maturation of urease via the functional incorporation of the urease nickel metallocenter. This chain is Urease accessory protein UreF, found in Haemophilus influenzae (strain PittGG).